Consider the following 493-residue polypeptide: MNSTSLYAAIDLGSNSFHMLVVREAAGSIQTLTRIKRKVRLAAGLNNDNHLSAEAMERGWQCLRLFAERLQDIPQPQIRVVATATLRLAVNAGEFIAKAQTILGCPVQVISGEEEARLIYQGVAHTTGGADQRLVVDIGGASTELVTGTGAQTTSLFSLSMGCVTWLERYFSDRNLAQENFDDAEKAARDVLRPVADELRFHGWKVCVGASGTVQALQEIMMAQGMDERITLAKLQQLKQRAIQCGRLEELEIEGLTLERALVFPSGLAILIAIFTELNIQSMTLAGGALREGLVYGMLHLAVDQDIRSRTLRNIQRRFIVDTDQANRVAKLADNFLKQVENAWHIEPISRELLLSACQLHEIGLSVDFKQAPYHAAYLVRHLDLPGYTPAQKKLLATLLLNQTNPVDLSSLHQQNAVPPRVAEQLCRLLRLAILFAGRRRDDLVPEITLQALNENLTLTLPGDWLAHHPLGKELIDQESQWQSYVHWPLDVR.

Belongs to the GppA/Ppx family. GppA subfamily.

The enzyme catalyses guanosine 3'-diphosphate 5'-triphosphate + H2O = guanosine 3',5'-bis(diphosphate) + phosphate + H(+). It functions in the pathway purine metabolism; ppGpp biosynthesis; ppGpp from GTP: step 2/2. Its function is as follows. Catalyzes the conversion of pppGpp to ppGpp. Guanosine pentaphosphate (pppGpp) is a cytoplasmic signaling molecule which together with ppGpp controls the 'stringent response', an adaptive process that allows bacteria to respond to amino acid starvation, resulting in the coordinated regulation of numerous cellular activities. This Salmonella agona (strain SL483) protein is Guanosine-5'-triphosphate,3'-diphosphate pyrophosphatase.